Consider the following 472-residue polypeptide: Ribulose bisphosphate carboxylase large chain 1 (472 aa).

Residues Asn115 and Thr165 each contribute to the substrate site. Catalysis depends on Lys167, which acts as the Proton acceptor. Residue Lys169 participates in substrate binding. Mg(2+) is bound by residues Lys193, Asp195, and Glu196. At Lys193 the chain carries N6-carboxylysine. The active-site Proton acceptor is the His286. Residues Arg287, His319, and Ser371 each coordinate substrate.

Belongs to the RuBisCO large chain family. Type I subfamily. In terms of assembly, heterohexadecamer of 8 large chains and 8 small chains. It depends on Mg(2+) as a cofactor.

The enzyme catalyses 2 (2R)-3-phosphoglycerate + 2 H(+) = D-ribulose 1,5-bisphosphate + CO2 + H2O. It catalyses the reaction D-ribulose 1,5-bisphosphate + O2 = 2-phosphoglycolate + (2R)-3-phosphoglycerate + 2 H(+). In terms of biological role, ruBisCO catalyzes two reactions: the carboxylation of D-ribulose 1,5-bisphosphate, the primary event in carbon dioxide fixation, as well as the oxidative fragmentation of the pentose substrate. Both reactions occur simultaneously and in competition at the same active site. The protein is Ribulose bisphosphate carboxylase large chain 1 of Hydrogenovibrio marinus.